The following is a 427-amino-acid chain: Serine hydroxymethyltransferase (427 aa).

(6S)-5,6,7,8-tetrahydrofolate contacts are provided by residues L127 and G131–L133. K236 is modified (N6-(pyridoxal phosphate)lysine).

It belongs to the SHMT family. Homodimer. Requires pyridoxal 5'-phosphate as cofactor.

It is found in the cytoplasm. The enzyme catalyses (6R)-5,10-methylene-5,6,7,8-tetrahydrofolate + glycine + H2O = (6S)-5,6,7,8-tetrahydrofolate + L-serine. Its pathway is one-carbon metabolism; tetrahydrofolate interconversion. The protein operates within amino-acid biosynthesis; glycine biosynthesis; glycine from L-serine: step 1/1. Its function is as follows. Catalyzes the reversible interconversion of serine and glycine with tetrahydrofolate (THF) serving as the one-carbon carrier. This reaction serves as the major source of one-carbon groups required for the biosynthesis of purines, thymidylate, methionine, and other important biomolecules. Also exhibits THF-independent aldolase activity toward beta-hydroxyamino acids, producing glycine and aldehydes, via a retro-aldol mechanism. This Paramagnetospirillum magneticum (strain ATCC 700264 / AMB-1) (Magnetospirillum magneticum) protein is Serine hydroxymethyltransferase.